Here is a 697-residue protein sequence, read N- to C-terminus: Elongation factor G 2 (697 aa).

The tr-type G domain maps to 5-280 (SKYRNIGIFA…AVVDYLPAPD (276 aa)). Residues 14 to 21 (AHVDAGKT), 78 to 82 (DTPGH), and 132 to 135 (NKLD) each bind GTP.

Belongs to the TRAFAC class translation factor GTPase superfamily. Classic translation factor GTPase family. EF-G/EF-2 subfamily.

It is found in the cytoplasm. In terms of biological role, catalyzes the GTP-dependent ribosomal translocation step during translation elongation. During this step, the ribosome changes from the pre-translocational (PRE) to the post-translocational (POST) state as the newly formed A-site-bound peptidyl-tRNA and P-site-bound deacylated tRNA move to the P and E sites, respectively. Catalyzes the coordinated movement of the two tRNA molecules, the mRNA and conformational changes in the ribosome. The sequence is that of Elongation factor G 2 (fusB) from Shewanella oneidensis (strain ATCC 700550 / JCM 31522 / CIP 106686 / LMG 19005 / NCIMB 14063 / MR-1).